Here is a 383-residue protein sequence, read N- to C-terminus: Dual-specificity RNA methyltransferase RlmN (383 aa).

Glutamate 95 serves as the catalytic Proton acceptor. Residues 101–349 (EETRGTLCVS…TTVRKTRGDD (249 aa)) enclose the Radical SAM core domain. Cysteine 108 and cysteine 354 form a disulfide bridge. [4Fe-4S] cluster is bound by residues cysteine 115, cysteine 119, and cysteine 122. Residues 180-181 (GE), serine 212, 234-236 (SLH), and asparagine 311 contribute to the S-adenosyl-L-methionine site. Cysteine 354 (S-methylcysteine intermediate) is an active-site residue.

This sequence belongs to the radical SAM superfamily. RlmN family. [4Fe-4S] cluster serves as cofactor.

It is found in the cytoplasm. The enzyme catalyses adenosine(2503) in 23S rRNA + 2 reduced [2Fe-2S]-[ferredoxin] + 2 S-adenosyl-L-methionine = 2-methyladenosine(2503) in 23S rRNA + 5'-deoxyadenosine + L-methionine + 2 oxidized [2Fe-2S]-[ferredoxin] + S-adenosyl-L-homocysteine. It carries out the reaction adenosine(37) in tRNA + 2 reduced [2Fe-2S]-[ferredoxin] + 2 S-adenosyl-L-methionine = 2-methyladenosine(37) in tRNA + 5'-deoxyadenosine + L-methionine + 2 oxidized [2Fe-2S]-[ferredoxin] + S-adenosyl-L-homocysteine. Its function is as follows. Specifically methylates position 2 of adenine 2503 in 23S rRNA and position 2 of adenine 37 in tRNAs. m2A2503 modification seems to play a crucial role in the proofreading step occurring at the peptidyl transferase center and thus would serve to optimize ribosomal fidelity. The protein is Dual-specificity RNA methyltransferase RlmN of Paraburkholderia xenovorans (strain LB400).